We begin with the raw amino-acid sequence, 245 residues long: Protein-glutamine gamma-glutamyltransferase (245 aa).

It belongs to the bacillus TGase family.

The enzyme catalyses L-glutaminyl-[protein] + L-lysyl-[protein] = [protein]-L-lysyl-N(6)-5-L-glutamyl-[protein] + NH4(+). Probably plays a role in the assembly of the spore coat proteins by catalyzing epsilon-(gamma-glutamyl)lysine cross-links. In wild-type spores at 37 degrees Celsius, tgl mediates the cross-linking of GerQ in higher molecular mass forms, probably in cooperation with YabG. In Bacillus subtilis (strain 168), this protein is Protein-glutamine gamma-glutamyltransferase (tgl).